The following is a 510-amino-acid chain: MKQELVLILDFGGQYNQLIARRVREHNIYCEVVPYKITAEEIKLKNPKGLILTGGPSSVYGESTPRCEEEIFQLDIPILGICYGGQLMAHTLGGKVNRAKNREYGKTALQVDGNSKLFKEVAQDSICWMSHTDFIETAPAGFKITGTTADCPVAAMENQEKALYAVQFHPEVEHTEKGKEILKNFLYEVCHCQGDWTMENYIEKEIEAIRNLVGDRKVLCALSGGVDSSVAAVLVHQAIGDNLTCVFVDHGLLRKDEGDWVEDIFRNQFEMNFIRVNAEERFLGKLKGVTDPELKRKAIGELFIRVFEEEAQKIGDFDFLVQGTLYPDIIESGTETAAVIKSHHNVGGLPEDMKFQLIEPFKFLFKDEVRIAGLELGVPEEIVWRQPFPGPGLAVRVLGEITEEKLHIVREADAIVRDEIIKAGLHRQIWQYFAVLPNIMSVGVMGDERTYAHTIGIRAITSSDAMTADWARIPFEVLENMSRRIVNEVEGANRIVYDITSKPPSTVEWE.

The region spanning 5 to 195 (LVLILDFGGQ…LYEVCHCQGD (191 aa)) is the Glutamine amidotransferase type-1 domain. Catalysis depends on Cys82, which acts as the Nucleophile. Residues His169 and Glu171 contribute to the active site. A GMPS ATP-PPase domain is found at 196–385 (WTMENYIEKE…LGVPEEIVWR (190 aa)). Position 223 to 229 (223 to 229 (SGGVDSS)) interacts with ATP.

In terms of assembly, homodimer.

The catalysed reaction is XMP + L-glutamine + ATP + H2O = GMP + L-glutamate + AMP + diphosphate + 2 H(+). Its pathway is purine metabolism; GMP biosynthesis; GMP from XMP (L-Gln route): step 1/1. Catalyzes the synthesis of GMP from XMP. This Alkaliphilus metalliredigens (strain QYMF) protein is GMP synthase [glutamine-hydrolyzing].